The following is a 240-amino-acid chain: Protein MGARP (240 aa).

At 1 to 40 (MYLRRAVSKTLALPLRAPPNPAPLGKDASLRRMSSNRFPG) the chain is on the cytoplasmic side. A helical; Anchor for type IV membrane protein transmembrane segment spans residues 41–63 (SSGSNMIYYLVVGVTVSAGGYYA). The Mitochondrial intermembrane portion of the chain corresponds to 64–240 (YKTVTSDQAK…VGSEAASAQG (177 aa)). The segment at 166-240 (RETTEVNPET…VGSEAASAQG (75 aa)) is disordered. The segment covering 170 to 181 (EVNPETTPEVTN) has biased composition (low complexity). Positions 191–201 (DNDKDTTKNET) are enriched in basic and acidic residues. Positions 202-213 (SDEYAELEEENS) are enriched in acidic residues. A compositionally biased stretch (low complexity) spans 228 to 240 (EASVGSEAASAQG).

As to quaternary structure, interacts with RHOT1/Miro-1, TRAK1/OIP106 and TRAK2/GRIF1. Interacts with RHOT2/Miro-2. As to expression, expressed in the brain, adrenal gland and corneal endothelium (CE). Expressed in steroid-producing cells of the ovary and testis (at protein level). Expressed in steroid-producing cells of the ovary and testis. Weakly expressed in placenta. Expressed in corneal endothelial cells.

The protein localises to the mitochondrion. It localises to the mitochondrion outer membrane. It is found in the mitochondrion inner membrane. In terms of biological role, plays a role in the trafficking of mitochondria along microtubules. Regulates the kinesin-mediated axonal transport of mitochondria to nerve terminals along microtubules during hypoxia. Participates in the translocation of TRAK2/GRIF1 from the cytoplasm to the mitochondrion. Also plays a role in steroidogenesis through maintenance of mitochondrial abundance and morphology. Plays an inhibitory role during neocortex development by regulating mitochondrial morphology, distribution and motility in neocortical neurons. This is Protein MGARP (MGARP) from Homo sapiens (Human).